Reading from the N-terminus, the 104-residue chain is Large ribosomal subunit protein uL24 (104 aa).

Residues 82 to 104 (RVGYRFDENGKKVRVSRRNGKDI) are disordered. Basic residues predominate over residues 93 to 104 (KVRVSRRNGKDI).

This sequence belongs to the universal ribosomal protein uL24 family. As to quaternary structure, part of the 50S ribosomal subunit.

One of two assembly initiator proteins, it binds directly to the 5'-end of the 23S rRNA, where it nucleates assembly of the 50S subunit. Its function is as follows. One of the proteins that surrounds the polypeptide exit tunnel on the outside of the subunit. The chain is Large ribosomal subunit protein uL24 from Corynebacterium glutamicum (strain R).